Reading from the N-terminus, the 110-residue chain is MEARAIAKYMRISPRKVRLVAENIKGKPVEEALNILKFTPKKGAEMLSKVLYSAVANAEQIPGVDVDSLCVDIVKVDEGPTWKRIQPRAMGRAYRIRKRTSHITVVVKEM.

It belongs to the universal ribosomal protein uL22 family. In terms of assembly, part of the 50S ribosomal subunit.

This protein binds specifically to 23S rRNA; its binding is stimulated by other ribosomal proteins, e.g. L4, L17, and L20. It is important during the early stages of 50S assembly. It makes multiple contacts with different domains of the 23S rRNA in the assembled 50S subunit and ribosome. Its function is as follows. The globular domain of the protein is located near the polypeptide exit tunnel on the outside of the subunit, while an extended beta-hairpin is found that lines the wall of the exit tunnel in the center of the 70S ribosome. This Maridesulfovibrio salexigens (strain ATCC 14822 / DSM 2638 / NCIMB 8403 / VKM B-1763) (Desulfovibrio salexigens) protein is Large ribosomal subunit protein uL22.